The chain runs to 304 residues: MTVPHFLTLFDLPADEIRQLVRRAIDLKALQRQGKIYEPLKNQVLGMLFEKSSTRTRVSFEVGMIQLGGNAVFLSPRDTQLGRGEPLEDTARVLSRMVDCLMVRTFSHSMLEHFSAYSQVPVINALTDSYHPCQLLADIQTYFEHRGDIQGRTVAWIGDGNNMCQSYINAACQFDFQLHIATPAGYGPDPAILQMARERVQIIAEPREAVRGADLVVTDVWTSMGQEKEKHRRLQDLADYQVNGELMSLAKRDALFMHCLPAHRGEEVSAEVIDGPQSVVWDEAENRLHAQKALLEKLLIGGPL.

Residues 53–56, Gln80, Arg104, and 131–134 each bind carbamoyl phosphate; these read STRT and HPCQ. L-ornithine is bound by residues Asn162, Asp219, and 223–224; that span reads SM. Residues 259–260 and Arg287 contribute to the carbamoyl phosphate site; that span reads CL.

This sequence belongs to the aspartate/ornithine carbamoyltransferase superfamily. OTCase family.

It is found in the cytoplasm. The enzyme catalyses carbamoyl phosphate + L-ornithine = L-citrulline + phosphate + H(+). Its pathway is amino-acid biosynthesis; L-arginine biosynthesis; L-arginine from L-ornithine and carbamoyl phosphate: step 1/3. Functionally, reversibly catalyzes the transfer of the carbamoyl group from carbamoyl phosphate (CP) to the N(epsilon) atom of ornithine (ORN) to produce L-citrulline. The sequence is that of Ornithine carbamoyltransferase from Nitrosococcus oceani (strain ATCC 19707 / BCRC 17464 / JCM 30415 / NCIMB 11848 / C-107).